The primary structure comprises 520 residues: 2-isopropylmalate synthase (520 aa).

A Pyruvate carboxyltransferase domain is found at 12-274 (IRIFDTTLRD…DSAINTPRIV (263 aa)). The Mn(2+) site is built by aspartate 21, histidine 209, histidine 211, and asparagine 245. A regulatory domain region spans residues 396–520 (RLASMTISDV…VIAGKTAAVA (125 aa)).

The protein belongs to the alpha-IPM synthase/homocitrate synthase family. LeuA type 1 subfamily. Homodimer. Mn(2+) serves as cofactor.

It localises to the cytoplasm. It catalyses the reaction 3-methyl-2-oxobutanoate + acetyl-CoA + H2O = (2S)-2-isopropylmalate + CoA + H(+). It participates in amino-acid biosynthesis; L-leucine biosynthesis; L-leucine from 3-methyl-2-oxobutanoate: step 1/4. Catalyzes the condensation of the acetyl group of acetyl-CoA with 3-methyl-2-oxobutanoate (2-ketoisovalerate) to form 3-carboxy-3-hydroxy-4-methylpentanoate (2-isopropylmalate). This chain is 2-isopropylmalate synthase, found in Xanthomonas oryzae pv. oryzae (strain KACC10331 / KXO85).